A 919-amino-acid chain; its full sequence is Glutamate receptor ionotropic, kainate 3 (919 aa).

An N-terminal signal peptide occupies residues M1–G31. At M32 to P563 the chain is on the extracellular side. 7 N-linked (GlcNAc...) asparagine glycosylation sites follow: N70, N76, N278, N381, N415, N426, and N433. A disulfide bridge connects residues C99 and C350. 3 residues coordinate L-glutamate: P518, T520, and R525. N-linked (GlcNAc...) asparagine glycosylation is found at N548 and N551. Residues D564 to A584 form a helical membrane-spanning segment. At R585–R636 the chain is on the cytoplasmic side. The chain crosses the membrane as a helical span at residues I637 to L657. The Extracellular portion of the chain corresponds to A658 to K820. A691, T692, and E739 together coordinate L-glutamate. An N-linked (GlcNAc...) asparagine glycan is attached at N752. Residues I821 to G841 form a helical membrane-spanning segment. The Cytoplasmic segment spans residues E842–P919. The residue at position 869 (S869) is a Phosphoserine. Residue K887 forms a Glycyl lysine isopeptide (Lys-Gly) (interchain with G-Cter in SUMO1) linkage.

It belongs to the glutamate-gated ion channel (TC 1.A.10.1) family. GRIK3 subfamily. In terms of assembly, homotetramer, and heterotetramer with either GRIK4 or GRIK5. Can form functional heteromeric receptors with GRIK2. Interacts with PRKCABP. Interacts with NETO2.

Its subcellular location is the cell membrane. It is found in the postsynaptic cell membrane. It carries out the reaction Ca(2+)(in) = Ca(2+)(out). Its function is as follows. Ionotropic glutamate receptor that functions as a cation-permeable ligand-gated ion channel, gated by L-glutamate and the glutamatergic agonist kainic acid. Binding of the excitatory neurotransmitter L-glutamate induces a conformation change, leading to the opening of the cation channel, and thereby converts the chemical signal to an electrical impulse. The receptor then desensitizes rapidly and enters a transient inactive state, characterized by the presence of bound agonist. In association with GRIK2, involved in presynaptic facilitation of glutamate release at hippocampal mossy fiber synapses. The polypeptide is Glutamate receptor ionotropic, kainate 3 (GRIK3) (Homo sapiens (Human)).